The sequence spans 138 residues: Cellular retinoic acid-binding protein 2 (138 aa).

The Nuclear localization signal motif lies at 21 to 31 (KALGVNMMMRK). Lys-102 is covalently cross-linked (Glycyl lysine isopeptide (Lys-Gly) (interchain with G-Cter in SUMO)). 133–135 (RVY) provides a ligand contact to all-trans-retinoate.

Belongs to the calycin superfamily. Fatty-acid binding protein (FABP) family. Interacts with importin alpha. Interacts with RXR and RARA. Sumoylated in response to retinoic acid binding, sumoylation is critical for dissociation from ER and subsequent nuclear translocation. In terms of tissue distribution, embryo and skin of adult mouse.

It is found in the cytoplasm. It localises to the endoplasmic reticulum. The protein localises to the nucleus. Transports retinoic acid to the nucleus. Regulates the access of retinoic acid to the nuclear retinoic acid receptors. This Mus musculus (Mouse) protein is Cellular retinoic acid-binding protein 2 (Crabp2).